The primary structure comprises 687 residues: Pre-mRNA-splicing factor CLF1 (687 aa).

HAT repeat units lie at residues 45 to 77 (EYQR…FEIE), 79 to 111 (HDMR…AELK), 113 to 145 (KCIN…VEES), 147 to 178 (NNVE…FEIR), 180 to 211 (KNWN…FENR), 213 to 247 (GNTE…AKLV), 251 to 283 (AHWE…LKAG), 300 to 332 (TISY…LISE), 337 to 369 (QIMQ…LWMR), 383 to 416 (LEEE…FLIR), 451 to 483 (KEFD…LEEN), 525 to 557 (QEFE…YQTS), and 629 to 661 (LDQE…YIFP).

Belongs to the crooked-neck family. Belongs to the NTC complex (or PRP19-associated complex), composed of at least CEF1, CLF1, ISY1, NTC20, SNT309, SYF1, SYF2, and PRP19. The NTC complex associates with the spliceosome after the release of the U1 and U4 snRNAs and forms the CWC spliceosome subcomplex (or CEF1-associated complex) reminiscent of a late-stage spliceosome composed also of the U2, U5 and U6 snRNAs and at least BUD13, BUD31, BRR2, CDC40, CUS1, CWC2, CWC15, CWC21, CWC22, CWC23, CWC24, CWC25, CWC27, ECM2, HSH155, IST3, LEA1, MSL1, PRP8, PRP9, PRP11, PRP21, PRP22, PRP45, PRP46, SLU7, SMB1, SMD1, SMD2, SMD3, SMX2, SMX3, SNU114, SPP2, RSE1 and YJU2. Interacts with CEF1, ISY1, MUD2, NTC20, PRP22, PRP40, PRP46, SYF1, SYF2, and the ORC2 subunit of the origin recognition complex.

It localises to the nucleus. Involved in pre-mRNA splicing and cell cycle progression. Required for the spliceosome assembly by promoting the functional integration of the U4/U6.U5 tri-snRNP particle into the U1-, U2-dependent pre-spliceosome. Also recruits PRP19 to the spliceosome, as a component of the NTC complex (or PRP19-associated complex). The association of the NTC complex to the spliceosome mediates conformational rearrangement or stabilizes the structure of the spliceosome after U4 snRNA dissociation, which leads to spliceosome maturation. Required for initiation of the DNA replication by binding the RNA replication origins, probably through its interaction with the origin recognition complex (ORC). This is Pre-mRNA-splicing factor CLF1 (CLF1) from Saccharomyces cerevisiae (strain ATCC 204508 / S288c) (Baker's yeast).